A 461-amino-acid chain; its full sequence is Fumarate hydratase class II (461 aa).

Residues 97–99, 127–130, 137–139, and Thr-185 contribute to the substrate site; these read SGT, HPND, and SSN. The active-site Proton donor/acceptor is the His-186. The active site involves Ser-316. Residues Ser-317 and 322–324 each bind substrate; that span reads KVN.

The protein belongs to the class-II fumarase/aspartase family. Fumarase subfamily. Homotetramer.

Its subcellular location is the cytoplasm. The enzyme catalyses (S)-malate = fumarate + H2O. The protein operates within carbohydrate metabolism; tricarboxylic acid cycle; (S)-malate from fumarate: step 1/1. Its function is as follows. Involved in the TCA cycle. Catalyzes the stereospecific interconversion of fumarate to L-malate. The chain is Fumarate hydratase class II from Staphylococcus aureus (strain MRSA252).